Consider the following 824-residue polypeptide: Leucine--tRNA ligase (824 aa).

The 'HIGH' region motif lies at 42-52 (PYPSGHLHMGH). The 'KMSKS' region signature appears at 581 to 585 (KMSKS). ATP is bound at residue Lys-584.

It belongs to the class-I aminoacyl-tRNA synthetase family.

Its subcellular location is the cytoplasm. It catalyses the reaction tRNA(Leu) + L-leucine + ATP = L-leucyl-tRNA(Leu) + AMP + diphosphate. This is Leucine--tRNA ligase from Syntrophomonas wolfei subsp. wolfei (strain DSM 2245B / Goettingen).